The sequence spans 335 residues: MSLDINQIALHQLIKRDEQNLELVLRDSLLEPTTTVVEMVAELHRVYSAKNKAYGLFNEESELAQALRLQRQGEEDFLAFSRAATGRLRDELAKYPFADGGIVLFCHYRYLAVEYLLVTVLNNLSSMRVNENLDINPTHYLDINHADIVARIDLTEWETNPQSTRYLTFLKGRVGRKVADFFMDFLGASEGLNAKAQNRGLLQAVDDFTAEAQLDKAERQNVRQQVYSYCNEQLQAGEEIELESLSKELSGVSEVSFSEFTAEKGYELEESFPADRSTLRQLTKYAGSGGGLTINFDAMLLGERIFWDPATDTLTIKGTPPNLRDQLQRRTSGGK.

The protein belongs to the YejK family.

The protein localises to the cytoplasm. It is found in the nucleoid. The chain is Nucleoid-associated protein SeAg_B2375 from Salmonella agona (strain SL483).